Here is a 336-residue protein sequence, read N- to C-terminus: F-box protein PP2-B1 (336 aa).

Residues Met1–Asp22 are disordered. Gly residues predominate over residues Ser9–Ser18. In terms of domain architecture, F-box spans Ala29–Phe75.

In terms of assembly, part of a SCF (ASK-cullin-F-box) protein ligase complex. Interacts with SKP1A/ASK1 and SPK1B/ASK2.

It is found in the nucleus. The protein operates within protein modification; protein ubiquitination. Component of SCF(ASK-cullin-F-box) E3 ubiquitin ligase complexes, which may mediate the ubiquitination and subsequent proteasomal degradation of target proteins. The protein is F-box protein PP2-B1 (PP2B1) of Arabidopsis thaliana (Mouse-ear cress).